The primary structure comprises 814 residues: Protein kinase C-binding protein NELL2 (814 aa).

The N-terminal stretch at 1 to 19 (MEFILGIFCVLFCLRAGAG) is a signal peptide. N-linked (GlcNAc...) asparagine glycans are attached at residues asparagine 51, asparagine 223, and asparagine 296. The region spanning 53 to 226 (SKAFLFQDTS…SQCPDLNRTC (174 aa)) is the Laminin G-like domain. The region spanning 270–329 (RSCTVKGNIYRELESWMDGCKKCTCTNGTAQCETLTCSAPNCLSGFSPAYVPGKCCKECQ) is the VWFC 1 domain. The region spanning 395 to 437 (GHDFCSEGHNCMGYSICKNLDDKAVCICRDGFRALREDNAYCE) is the EGF-like 1 domain. 3 cysteine pairs are disulfide-bonded: cysteine 399/cysteine 411, cysteine 405/cysteine 420, and cysteine 422/cysteine 436. Positions 438, 439, and 441 each coordinate Ca(2+). Residues 438–479 (DIDECTEGRHYCRENTVCVNTPGSFMCVCQTGYLKIDDYSCT) enclose the EGF-like 2; calcium-binding domain. 9 disulfides stabilise this stretch: cysteine 442-cysteine 455, cysteine 449-cysteine 464, cysteine 466-cysteine 478, cysteine 484-cysteine 497, cysteine 491-cysteine 506, cysteine 508-cysteine 519, cysteine 523-cysteine 533, cysteine 527-cysteine 539, and cysteine 541-cysteine 550. Residues asparagine 457, threonine 458, and serine 461 each coordinate Ca(2+). Positions 480 to 520 (EHNECATNQHSCDENAMCFNTVGGHNCVCQPGYTGNGTDCR) constitute an EGF-like 3; calcium-binding domain. The N-linked (GlcNAc...) asparagine glycan is linked to asparagine 515. One can recognise an EGF-like 4 domain in the interval 521–551 (AFCKDGCRNGGTCIAPNICACPQGFTGPSCE). Ca(2+)-binding residues include aspartate 553, isoleucine 554, and glutamate 556. One can recognise an EGF-like 5; calcium-binding domain in the interval 553-599 (DIDECTEGFVQCDSRANCINLPGWYHCECRDGYHDNGMFSLGGESCE). 3 cysteine pairs are disulfide-bonded: cysteine 557–cysteine 570, cysteine 564–cysteine 579, and cysteine 581–cysteine 598. Ca(2+)-binding residues include asparagine 572, leucine 573, and tryptophan 576. Ca(2+) contacts are provided by aspartate 600, isoleucine 601, and glutamate 603. Residues 600-635 (DIDECATGRHSCSNDTVCFNLDGGFDCRCPHGKNCS) form the EGF-like 6; calcium-binding domain. 3 disulfides stabilise this stretch: cysteine 604-cysteine 617, cysteine 611-cysteine 626, and cysteine 628-cysteine 634. Residue asparagine 613 is glycosylated (N-linked (GlcNAc...) asparagine). Positions 619, 620, and 623 each coordinate Ca(2+). An N-linked (GlcNAc...) asparagine glycan is attached at asparagine 633. 2 VWFC domains span residues 636 to 691 (GDCT…PECD) and 696 to 754 (SQCL…PRCV).

In terms of assembly, homotrimer.

Its subcellular location is the secreted. Functionally, may regulate neuronal differentiation, polarization and axon guidance. This chain is Protein kinase C-binding protein NELL2 (nell2.L), found in Xenopus laevis (African clawed frog).